A 386-amino-acid polypeptide reads, in one-letter code: Protein-glutamate methylesterase/protein-glutamine glutaminase 3 (386 aa).

The Response regulatory domain occupies 4-121; it reads KVLVVDDSGF…SRNPQKVKQL (118 aa). A 4-aspartylphosphate modification is found at aspartate 55. Residues 132–194 show a composition bias toward low complexity; that stretch reads SNRRSSGFGS…SHAPAHPTTS (63 aa). Positions 132-197 are disordered; it reads SNRRSSGFGS…PAHPTTSGTA (66 aa). Residues 191-383 enclose the CheB-type methylesterase domain; that stretch reads PTTSGTAKRK…LDDIGRHLVE (193 aa). Catalysis depends on residues serine 210, histidine 237, and aspartate 330.

Belongs to the CheB family. Post-translationally, phosphorylated by CheA. Phosphorylation of the N-terminal regulatory domain activates the methylesterase activity.

It is found in the cytoplasm. The enzyme catalyses [protein]-L-glutamate 5-O-methyl ester + H2O = L-glutamyl-[protein] + methanol + H(+). It catalyses the reaction L-glutaminyl-[protein] + H2O = L-glutamyl-[protein] + NH4(+). Functionally, involved in chemotaxis. Part of a chemotaxis signal transduction system that modulates chemotaxis in response to various stimuli. Catalyzes the demethylation of specific methylglutamate residues introduced into the chemoreceptors (methyl-accepting chemotaxis proteins or MCP) by CheR. Also mediates the irreversible deamidation of specific glutamine residues to glutamic acid. The sequence is that of Protein-glutamate methylesterase/protein-glutamine glutaminase 3 from Pseudomonas syringae pv. syringae (strain B728a).